Here is a 774-residue protein sequence, read N- to C-terminus: Lon protease 2 (774 aa).

The 194-residue stretch at 5–198 (YPLMPLRDIV…LLLEILFREL (194 aa)) folds into the Lon N-terminal domain. Position 350–357 (350–357 (GPPGVGKT)) interacts with ATP. Residues 588 to 769 (RDEVGLATGL…DQVLEQALLS (182 aa)) enclose the Lon proteolytic domain. Catalysis depends on residues Ser-675 and Lys-718.

Belongs to the peptidase S16 family. In terms of assembly, homohexamer. Organized in a ring with a central cavity.

The protein resides in the cytoplasm. It catalyses the reaction Hydrolysis of proteins in presence of ATP.. Functionally, ATP-dependent serine protease that mediates the selective degradation of mutant and abnormal proteins as well as certain short-lived regulatory proteins. Required for cellular homeostasis and for survival from DNA damage and developmental changes induced by stress. Degrades polypeptides processively to yield small peptide fragments that are 5 to 10 amino acids long. Binds to DNA in a double-stranded, site-specific manner. This is Lon protease 2 from Desulfotalea psychrophila (strain LSv54 / DSM 12343).